The sequence spans 102 residues: uncharacterized protein (102 aa).

A signal peptide spans 1–19; it reads MFLFCFVLFCSLVFPLARG.

This is an uncharacterized protein from Saccharomyces cerevisiae (strain ATCC 204508 / S288c) (Baker's yeast).